The chain runs to 1032 residues: Kinesin heavy chain isoform 5A (1032 aa).

Alanine 2 carries the N-acetylalanine modification. A Kinesin motor domain is found at 9-327 (SIKVLCRFRP…LMFGQRAKTI (319 aa)). 86–93 (GQTSSGKT) contributes to the ATP binding site. Residues 174–315 (VSGPEEILDV…PSSYNDAETK (142 aa)) form a microtubule-binding region. Residues 271–361 (EGTKSYVPYR…KTKAQKETIA (91 aa)) are necessary for interaction with ZFYVE27. Positions 331–906 (ASVNLELTAE…VDRIKEAVRY (576 aa)) form a coiled coil. The tract at residues 353 to 1032 (TKAQKETIAK…FPLHQETAAS (680 aa)) is interaction with BICD2. The residue at position 397 (threonine 397) is a Phosphothreonine. Residues 904–939 (VRYKSSGKRGHSAQIAKPVRPGHYPASSPTNPYGTR) are disordered. The globular stretch occupies residues 907–1032 (KSSGKRGHSA…FPLHQETAAS (126 aa)).

It belongs to the TRAFAC class myosin-kinesin ATPase superfamily. Kinesin family. Kinesin subfamily. In terms of assembly, oligomer composed of two heavy chains and two light chains. Interacts with GRIP1. Interacts with FMR1 (via C-terminus); this interaction is increased in a mGluR-dependent manner. Interacts with BORCS5. Interacts with ZFYVE27. Interacts with VAPA, VAPB, SURF4, RAB11A (GDP-bound form), RAB11B (GDP-bound form) and RTN3 in a ZFYVE27-dependent manner. Interacts with BICD2. Interacts with DTNB.

Its subcellular location is the cytoplasm. It is found in the perinuclear region. It localises to the cytoskeleton. The protein localises to the perikaryon. The enzyme catalyses ATP + H2O + a kinesin associated with a microtubule at position (n) = ADP + phosphate a kinesin associated with a microtubule at position (n+1, toward the plus end).. Functionally, microtubule-dependent motor required for slow axonal transport of neurofilament proteins (NFH, NFM and NFL). Can induce formation of neurite-like membrane protrusions in non-neuronal cells in a ZFYVE27-dependent manner. The ZFYVE27-KIF5A complex contributes to the vesicular transport of VAPA, VAPB, SURF4, RAB11A, RAB11B and RTN3 proteins in neurons. Required for anterograde axonal transportation of MAPK8IP3/JIP3 which is essential for MAPK8IP3/JIP3 function in axon elongation. In Pongo abelii (Sumatran orangutan), this protein is Kinesin heavy chain isoform 5A (KIF5A).